Reading from the N-terminus, the 955-residue chain is 2-oxoglutarate dehydrogenase E1 component (955 aa).

This sequence belongs to the alpha-ketoglutarate dehydrogenase family. In terms of assembly, homodimer. Part of the 2-oxoglutarate dehydrogenase (OGDH) complex composed of E1 (2-oxoglutarate dehydrogenase), E2 (dihydrolipoamide succinyltransferase) and E3 (dihydrolipoamide dehydrogenase); the complex contains multiple copies of the three enzymatic components (E1, E2 and E3). Requires thiamine diphosphate as cofactor.

The catalysed reaction is N(6)-[(R)-lipoyl]-L-lysyl-[protein] + 2-oxoglutarate + H(+) = N(6)-[(R)-S(8)-succinyldihydrolipoyl]-L-lysyl-[protein] + CO2. Its function is as follows. E1 component of the 2-oxoglutarate dehydrogenase (OGDH) complex which catalyzes the decarboxylation of 2-oxoglutarate, the first step in the conversion of 2-oxoglutarate to succinyl-CoA and CO(2). In Bacillus cereus (strain AH187), this protein is 2-oxoglutarate dehydrogenase E1 component.